A 993-amino-acid polypeptide reads, in one-letter code: Isoleucine--tRNA ligase (993 aa).

Residues 64-74 carry the 'HIGH' region motif; sequence PYANGNIHIGH. Glutamate 621 contributes to the L-isoleucyl-5'-AMP binding site. A 'KMSKS' region motif is present at residues 662–666; that stretch reads KMSKS. Lysine 665 lines the ATP pocket.

It belongs to the class-I aminoacyl-tRNA synthetase family. IleS type 1 subfamily. Monomer.

Its subcellular location is the cytoplasm. The catalysed reaction is tRNA(Ile) + L-isoleucine + ATP = L-isoleucyl-tRNA(Ile) + AMP + diphosphate. Its function is as follows. Catalyzes the attachment of isoleucine to tRNA(Ile). As IleRS can inadvertently accommodate and process structurally similar amino acids such as valine, to avoid such errors it has two additional distinct tRNA(Ile)-dependent editing activities. One activity is designated as 'pretransfer' editing and involves the hydrolysis of activated Val-AMP. The other activity is designated 'posttransfer' editing and involves deacylation of mischarged Val-tRNA(Ile). This chain is Isoleucine--tRNA ligase, found in Mesorhizobium japonicum (strain LMG 29417 / CECT 9101 / MAFF 303099) (Mesorhizobium loti (strain MAFF 303099)).